We begin with the raw amino-acid sequence, 99 residues long: Co-chaperonin GroES (99 aa).

This sequence belongs to the GroES chaperonin family. As to quaternary structure, heptamer of 7 subunits arranged in a ring. Interacts with the chaperonin GroEL.

It is found in the cytoplasm. In terms of biological role, together with the chaperonin GroEL, plays an essential role in assisting protein folding. The GroEL-GroES system forms a nano-cage that allows encapsulation of the non-native substrate proteins and provides a physical environment optimized to promote and accelerate protein folding. GroES binds to the apical surface of the GroEL ring, thereby capping the opening of the GroEL channel. This is Co-chaperonin GroES from Corynebacterium jeikeium (strain K411).